Reading from the N-terminus, the 152-residue chain is Deoxyuridine 5'-triphosphate nucleotidohydrolase (152 aa).

Substrate is bound by residues 71–73, Asn84, 88–90, and Met98; these read RSG and LID.

It belongs to the dUTPase family. It depends on Mg(2+) as a cofactor.

The catalysed reaction is dUTP + H2O = dUMP + diphosphate + H(+). The protein operates within pyrimidine metabolism; dUMP biosynthesis; dUMP from dCTP (dUTP route): step 2/2. Functionally, this enzyme is involved in nucleotide metabolism: it produces dUMP, the immediate precursor of thymidine nucleotides and it decreases the intracellular concentration of dUTP so that uracil cannot be incorporated into DNA. In Aeromonas salmonicida (strain A449), this protein is Deoxyuridine 5'-triphosphate nucleotidohydrolase.